The following is a 121-amino-acid chain: Large ribosomal subunit protein bL21c (121 aa).

This sequence belongs to the bacterial ribosomal protein bL21 family. Part of the 50S ribosomal subunit.

The protein resides in the plastid. It localises to the chloroplast. This protein binds to 23S rRNA. In Huperzia lucidula (Shining clubmoss), this protein is Large ribosomal subunit protein bL21c.